A 535-amino-acid polypeptide reads, in one-letter code: Butyrophilin-like protein 9 (535 aa).

Residues 1 to 34 (MVDLSVSPDSLKPVSLTSSLVFLMHLLLLQPGEP) form the signal peptide. Residues 35–256 (SSEVKVLGPE…VFVPGASAWK (222 aa)) lie on the Extracellular side of the membrane. One can recognise an Ig-like V-type domain in the interval 54–135 (EVEFPCHLWP…SDKGTYGCRF (82 aa)). Residues Cys-59 and Cys-133 are joined by a disulfide bond. Asn-102, Asn-139, and Asn-224 each carry an N-linked (GlcNAc...) asparagine glycan. A helical membrane pass occupies residues 257-277 (SAFVATLPLLLVLAALALGVL). Residues 276–315 (VLRKQRRSREKLRKQAEKRQEKLTAELEKLQTELDWRRAE) are a coiled coil. The Cytoplasmic segment spans residues 278-535 (RKQRRSREKL…EPADPALDWW (258 aa)). Positions 310-509 (DWRRAEGQAE…LTICPLPVRG (200 aa)) constitute a B30.2/SPRY domain. A disordered region spans residues 340-367 (SLEVSEDGKSVSSRGAPPGPAPGHPQRF).

The protein belongs to the immunoglobulin superfamily. BTN/MOG family.

It is found in the membrane. The protein is Butyrophilin-like protein 9 (BTNL9) of Homo sapiens (Human).